A 295-amino-acid chain; its full sequence is tRNA-cytidine(32) 2-sulfurtransferase (295 aa).

The PP-loop motif signature appears at 63–68 (SGGKDS). 3 residues coordinate [4Fe-4S] cluster: Cys-138, Cys-141, and Cys-229.

It belongs to the TtcA family. As to quaternary structure, homodimer. Mg(2+) serves as cofactor. Requires [4Fe-4S] cluster as cofactor.

The protein resides in the cytoplasm. It catalyses the reaction cytidine(32) in tRNA + S-sulfanyl-L-cysteinyl-[cysteine desulfurase] + AH2 + ATP = 2-thiocytidine(32) in tRNA + L-cysteinyl-[cysteine desulfurase] + A + AMP + diphosphate + H(+). It participates in tRNA modification. Its function is as follows. Catalyzes the ATP-dependent 2-thiolation of cytidine in position 32 of tRNA, to form 2-thiocytidine (s(2)C32). The sulfur atoms are provided by the cysteine/cysteine desulfurase (IscS) system. The protein is tRNA-cytidine(32) 2-sulfurtransferase of Mesorhizobium japonicum (strain LMG 29417 / CECT 9101 / MAFF 303099) (Mesorhizobium loti (strain MAFF 303099)).